A 625-amino-acid chain; its full sequence is MCGIVGFVGRTSVPDRDYFALDVVLEGLRRLEYRGYDSAGVAVVADGAVSFRKKAGKVQALEQELETSPMPQSCLGIGHTRWATHGGPTDANAHPHVVDGGKLAVVHNGIIENFAELKSELLGFGHNFVSETDTEVAATLLGHIFNNEANKDLTRAMQLTCQRLEGAFTLLAIHAETPDRIVAARRNSPLVIGVGEGENFLGSDVSGFIDYTKNAVEMDNDQIVTITADGYHITDFQGNHAEGKPFVVEWDAQAAEKGGYEFFMEKEIHEQPAAVRDTLMGRFDESGKLTLDELRIDESTLRSIDKIIVIACGTAAYAGHVARYAIEHWCRIPTEVELAHEFRYRDPIVNEKTLVVTLSQSGETMDTLMAVRHAREQGAKVIAICNTNGSSIPRESDACLYTHAGPEIAVASTKAFLAQITATYLLGLYLAQLRGNMFADEVNAVLGELRTIPDKVSAVLDGVEDQVKTLAQDMKDATSVLFLGRHVGFPVALEGALKLKELAYLHAEGFAAGELKHGPIALIEEGQPVFVIVPSPRGRDSLHAKVVSNIQEVRARGAITIVIAEEGDDAVEAYANHIIRIPQAPTLMQPLLATVPLQIFACGVAAAKGFDVDQPRNLAKSVTVE.

C2 serves as the catalytic Nucleophile; for GATase activity. Positions C2 to D229 constitute a Glutamine amidotransferase type-2 domain. SIS domains lie at I296–N436 and L470–P615. The For Fru-6P isomerization activity role is filled by K620.

In terms of assembly, homodimer.

The protein resides in the cytoplasm. It carries out the reaction D-fructose 6-phosphate + L-glutamine = D-glucosamine 6-phosphate + L-glutamate. Catalyzes the first step in hexosamine metabolism, converting fructose-6P into glucosamine-6P using glutamine as a nitrogen source. This Corynebacterium diphtheriae (strain ATCC 700971 / NCTC 13129 / Biotype gravis) protein is Glutamine--fructose-6-phosphate aminotransferase [isomerizing].